Here is a 1275-residue protein sequence, read N- to C-terminus: ATP-dependent helicase/nuclease subunit A (1275 aa).

Positions 4–481 (PKWTKEQLEV…IMLYKNFRSR (478 aa)) constitute a UvrD-like helicase ATP-binding domain. 25-32 (AAAGSGKT) contributes to the ATP binding site. In terms of domain architecture, UvrD-like helicase C-terminal spans 531–839 (TEIHLIQKDN…RIMSIHKSKG (309 aa)).

It belongs to the helicase family. AddA subfamily. As to quaternary structure, heterodimer of AddA and AddB/RexB. The cofactor is Mg(2+).

It carries out the reaction Couples ATP hydrolysis with the unwinding of duplex DNA by translocating in the 3'-5' direction.. It catalyses the reaction ATP + H2O = ADP + phosphate + H(+). Its function is as follows. The heterodimer acts as both an ATP-dependent DNA helicase and an ATP-dependent, dual-direction single-stranded exonuclease. Recognizes the chi site generating a DNA molecule suitable for the initiation of homologous recombination. The AddA nuclease domain is required for chi fragment generation; this subunit has the helicase and 3' -&gt; 5' nuclease activities. This is ATP-dependent helicase/nuclease subunit A from Clostridioides difficile (strain 630) (Peptoclostridium difficile).